A 445-amino-acid polypeptide reads, in one-letter code: Phosphoglucosamine mutase (445 aa).

Ser102 functions as the Phosphoserine intermediate in the catalytic mechanism. Mg(2+) is bound by residues Ser102, Asp241, Asp243, and Asp245. A Phosphoserine modification is found at Ser102.

It belongs to the phosphohexose mutase family. Requires Mg(2+) as cofactor. Activated by phosphorylation.

The catalysed reaction is alpha-D-glucosamine 1-phosphate = D-glucosamine 6-phosphate. Its function is as follows. Catalyzes the conversion of glucosamine-6-phosphate to glucosamine-1-phosphate. This is Phosphoglucosamine mutase from Shewanella baltica (strain OS155 / ATCC BAA-1091).